The primary structure comprises 192 residues: Small ribosomal subunit protein uS5 (192 aa).

The segment at 1–21 (MAAERERGGRERGGRDRDERD) is disordered. The S5 DRBM domain maps to 24-87 (FVDKLVHINR…DSAKRNLTRV (64 aa)).

It belongs to the universal ribosomal protein uS5 family. Part of the 30S ribosomal subunit. Contacts proteins S4 and S8.

Its function is as follows. With S4 and S12 plays an important role in translational accuracy. In terms of biological role, located at the back of the 30S subunit body where it stabilizes the conformation of the head with respect to the body. The chain is Small ribosomal subunit protein uS5 from Afipia carboxidovorans (strain ATCC 49405 / DSM 1227 / KCTC 32145 / OM5) (Oligotropha carboxidovorans).